Here is a 398-residue protein sequence, read N- to C-terminus: tRNA-specific 2-thiouridylase MnmA (398 aa).

ATP-binding positions include 20 to 27 and L46; that span reads AMSGGVDS. C114 acts as the Nucleophile in catalysis. A disulfide bridge connects residues C114 and C210. G138 is an ATP binding site. Residues 160–162 are interaction with tRNA; the sequence is RDQ. C210 functions as the Cysteine persulfide intermediate in the catalytic mechanism.

It belongs to the MnmA/TRMU family.

Its subcellular location is the cytoplasm. It carries out the reaction S-sulfanyl-L-cysteinyl-[protein] + uridine(34) in tRNA + AH2 + ATP = 2-thiouridine(34) in tRNA + L-cysteinyl-[protein] + A + AMP + diphosphate + H(+). Functionally, catalyzes the 2-thiolation of uridine at the wobble position (U34) of tRNA, leading to the formation of s(2)U34. The protein is tRNA-specific 2-thiouridylase MnmA of Brucella melitensis biotype 1 (strain ATCC 23456 / CCUG 17765 / NCTC 10094 / 16M).